The primary structure comprises 121 residues: MARIAGVDIPREKRIVISLTYIYGVGKTTAQKVLKEAGISEDTRTRELTEEQLNQLRDGLDKVKVEGDLRREISLNIKRLIEIGCYRGVRHRRGLPVRGQNTKNNSRTRKGPRRTVANKKK.

The interval 94–121 (GLPVRGQNTKNNSRTRKGPRRTVANKKK) is disordered. Residues 106–121 (SRTRKGPRRTVANKKK) are compositionally biased toward basic residues.

Belongs to the universal ribosomal protein uS13 family. In terms of assembly, part of the 30S ribosomal subunit. Forms a loose heterodimer with protein S19. Forms two bridges to the 50S subunit in the 70S ribosome.

Functionally, located at the top of the head of the 30S subunit, it contacts several helices of the 16S rRNA. In the 70S ribosome it contacts the 23S rRNA (bridge B1a) and protein L5 of the 50S subunit (bridge B1b), connecting the 2 subunits; these bridges are implicated in subunit movement. Contacts the tRNAs in the A and P-sites. In Exiguobacterium sibiricum (strain DSM 17290 / CCUG 55495 / CIP 109462 / JCM 13490 / 255-15), this protein is Small ribosomal subunit protein uS13.